A 34-amino-acid chain; its full sequence is Photosystem II reaction center protein M (34 aa).

A helical membrane pass occupies residues 5–25 (ILAFSATALLILFPTALLLIL).

This sequence belongs to the PsbM family. In terms of assembly, PSII is composed of 1 copy each of membrane proteins PsbA, PsbB, PsbC, PsbD, PsbE, PsbF, PsbH, PsbI, PsbJ, PsbK, PsbL, PsbM, PsbT, PsbX, PsbY, PsbZ, Psb30/Ycf12, at least 3 peripheral proteins of the oxygen-evolving complex and a large number of cofactors. It forms dimeric complexes.

The protein localises to the plastid membrane. One of the components of the core complex of photosystem II (PSII). PSII is a light-driven water:plastoquinone oxidoreductase that uses light energy to abstract electrons from H(2)O, generating O(2) and a proton gradient subsequently used for ATP formation. It consists of a core antenna complex that captures photons, and an electron transfer chain that converts photonic excitation into a charge separation. This subunit is found at the monomer-monomer interface. In Cuscuta gronovii (Common dodder), this protein is Photosystem II reaction center protein M.